The primary structure comprises 428 residues: Phosphomethylpyrimidine synthase 1 (428 aa).

Substrate-binding positions include Met94, Tyr123, His162, 184–186 (SRG), 225–228 (NGMR), and Glu264. His268 is a binding site for Zn(2+). Tyr291 contributes to the substrate binding site. Residue His332 participates in Zn(2+) binding. [4Fe-4S] cluster contacts are provided by Cys408, Cys411, and Cys415.

Belongs to the ThiC family. [4Fe-4S] cluster is required as a cofactor.

It carries out the reaction 5-amino-1-(5-phospho-beta-D-ribosyl)imidazole + S-adenosyl-L-methionine = 4-amino-2-methyl-5-(phosphooxymethyl)pyrimidine + CO + 5'-deoxyadenosine + formate + L-methionine + 3 H(+). It participates in cofactor biosynthesis; thiamine diphosphate biosynthesis. Functionally, catalyzes the synthesis of the hydroxymethylpyrimidine phosphate (HMP-P) moiety of thiamine from aminoimidazole ribotide (AIR) in a radical S-adenosyl-L-methionine (SAM)-dependent reaction. The chain is Phosphomethylpyrimidine synthase 1 from Methanosarcina barkeri (strain Fusaro / DSM 804).